A 230-amino-acid chain; its full sequence is uncharacterized protein (230 aa).

In terms of domain architecture, ABC transporter spans 2 to 230 (IQLSNVRKSY…ASSGQRSVGE (229 aa)). An ATP-binding site is contributed by 38–45 (GPSGSGKS).

The protein belongs to the ABC transporter superfamily. Part of a complex composed of YknX, YknY and YknZ. The complex interacts with YknW.

The protein localises to the cell membrane. In terms of biological role, part of an unusual four-component transporter, which is required for protection against the killing factor SdpC (sporulation-delaying protein). This is an uncharacterized protein from Bacillus subtilis (strain 168).